The chain runs to 443 residues: Mitochondrial enolase superfamily member 1 (443 aa).

Substrate-binding positions include 24–26 (GSD) and Tyr-34. Ser-148 carries the phosphoserine modification. Lys-220 is a binding site for substrate. The active-site Proton donor/acceptor is Lys-222. Asp-250 is a Mg(2+) binding site. Substrate contacts are provided by residues Asn-252, Glu-276, Glu-305, 355 to 357 (HAG), and Glu-386. Mg(2+)-binding residues include Glu-276 and Glu-305. His-355 is a catalytic residue.

The protein belongs to the mandelate racemase/muconate lactonizing enzyme family. ENOSF1 subfamily. The cofactor is Mg(2+). In terms of processing, could be sumoylated.

It localises to the mitochondrion. It catalyses the reaction L-fuconate = 2-dehydro-3-deoxy-L-fuconate + H2O. Functionally, plays a role in the catabolism of L-fucose, a sugar that is part of the carbohydrates that are attached to cellular glycoproteins. Catalyzes the dehydration of L-fuconate to 2-keto-3-deoxy-L-fuconate by the abstraction of the 2-proton to generate an enediolate intermediate that is stabilized by the magnesium ion. May down-regulate thymidylate synthase activity, possibly already at the RNA level, by promoting the degradation of TYMS mRNA via an antisense RNA-based mechanism. This chain is Mitochondrial enolase superfamily member 1 (ENOSF1), found in Bos taurus (Bovine).